The chain runs to 171 residues: 2-vinyl bacteriochlorophyllide hydratase (171 aa).

It functions in the pathway porphyrin-containing compound metabolism; bacteriochlorophyll biosynthesis (light-independent). In Rhodobacter capsulatus (strain ATCC BAA-309 / NBRC 16581 / SB1003), this protein is 2-vinyl bacteriochlorophyllide hydratase (bchF).